A 105-amino-acid chain; its full sequence is Iron-sulfur cluster assembly protein CyaY (105 aa).

This sequence belongs to the frataxin family.

Its function is as follows. Involved in iron-sulfur (Fe-S) cluster assembly. May act as a regulator of Fe-S biogenesis. This is Iron-sulfur cluster assembly protein CyaY from Paraburkholderia phytofirmans (strain DSM 17436 / LMG 22146 / PsJN) (Burkholderia phytofirmans).